A 430-amino-acid chain; its full sequence is Adenylosuccinate synthetase (430 aa).

Residues 12–18 and 40–42 each bind GTP; these read GDEGKGK and GHT. The active-site Proton acceptor is the D13. Residues D13 and G40 each coordinate Mg(2+). Residues 13–16, 38–41, T128, R142, Q223, T238, and R302 contribute to the IMP site; these read DEGK and NAGH. Residue H41 is the Proton donor of the active site. 298–304 serves as a coordination point for substrate; it reads TTTGRPR. GTP is bound by residues R304, 330-332, and 412-414; these read SID and SVG.

Belongs to the adenylosuccinate synthetase family. Homodimer. It depends on Mg(2+) as a cofactor.

It is found in the cytoplasm. It catalyses the reaction IMP + L-aspartate + GTP = N(6)-(1,2-dicarboxyethyl)-AMP + GDP + phosphate + 2 H(+). It participates in purine metabolism; AMP biosynthesis via de novo pathway; AMP from IMP: step 1/2. Functionally, plays an important role in the de novo pathway of purine nucleotide biosynthesis. Catalyzes the first committed step in the biosynthesis of AMP from IMP. This Streptococcus pyogenes serotype M3 (strain ATCC BAA-595 / MGAS315) protein is Adenylosuccinate synthetase.